We begin with the raw amino-acid sequence, 176 residues long: Viral interleukin-10 homolog (176 aa).

The first 25 residues, 1-25 (MLSVMVSSSLVLIVFFLGASEEAKP), serve as a signal peptide directing secretion. 2 disulfide bridges follow: Cys-38–Cys-128 and Cys-82–Cys-133. N-linked (GlcNAc...) asparagine; by host glycosylation occurs at Asn-152.

It belongs to the IL-10 family. Homodimer; disulfide-linked.

It localises to the secreted. In terms of biological role, functional viral IL-10 homolog. Can bind to the human IL-10 receptor and compete with human IL-10 for binding sites. Requires both subunits of the human IL-10 receptor complex to induce signal transduction events and biological activities. IL-10 signaling pathway has several immunosuppressive activities that are exploited by the virus. Inhibits TLR-induced type I interferon production in host plasmacytoid dendritic cells. The chain is Viral interleukin-10 homolog (UL111A) from Homo sapiens (Human).